A 78-amino-acid chain; its full sequence is Exodeoxyribonuclease 7 small subunit (78 aa).

Belongs to the XseB family. In terms of assembly, heterooligomer composed of large and small subunits.

It is found in the cytoplasm. The catalysed reaction is Exonucleolytic cleavage in either 5'- to 3'- or 3'- to 5'-direction to yield nucleoside 5'-phosphates.. In terms of biological role, bidirectionally degrades single-stranded DNA into large acid-insoluble oligonucleotides, which are then degraded further into small acid-soluble oligonucleotides. The protein is Exodeoxyribonuclease 7 small subunit of Desulfitobacterium hafniense (strain Y51).